A 433-amino-acid chain; its full sequence is Type I acyl-CoA thioesterase mpaH' (433 aa).

An abhydrolase domain region spans residues 58–246; that stretch reads HGVGLPKELY…IKALFGTTAD (189 aa). Residue Val-60 coordinates substrate. Catalysis depends on Ser-139, which acts as the Nucleophile. Residue Phe-140 participates in substrate binding. Catalysis depends on residues Asp-163 and His-365.

This sequence belongs to the AB hydrolase superfamily. MpaH hydrolase family. In terms of assembly, homodimer.

It is found in the peroxisome matrix. The enzyme catalyses mycophenolyl-CoA + H2O = mycophenolate + CoA + H(+). It participates in secondary metabolite biosynthesis; terpenoid biosynthesis. Type I acyl-CoA thioesterase; part of the gene cluster that mediates the biosynthesis of mycophenolic acid (MPA), the first isolated antibiotic natural product in the world obtained from a culture of Penicillium brevicompactum in 1893. MpaH' acts as a peroxisomal acyl-CoA hydrolase that converts MPA-CoA into the final product MPA. The first step of the pathway is the synthesis of 5-methylorsellinic acid (5MOA) by the cytosolic polyketide synthase mpaC. 5MOA is then converted to the phthalide compound 5,7-dihydroxy-4,6-dimethylphthalide (DHMP) by the endoplasmic reticulum-bound cytochrome P450 monooxygenase mpaDE. MpaDE first catalyzes hydroxylation of 5-MOA to 4,6-dihydroxy-2-(hydroxymethyl)-3-methylbenzoic acid (DHMB). MpaDE then acts as a lactone synthase that catalyzes the ring closure to convert DHMB into DHMP. The next step is the prenylation of DHMP by the Golgi apparatus-associated prenyltransferase mpaA to yield farnesyl-DHMP (FDHMP). The ER-bound oxygenase mpaB then mediates the oxidative cleavage the C19-C20 double bond in FDHMP to yield FDHMP-3C via a mycophenolic aldehyde intermediate. The O-methyltransferase mpaG catalyzes the methylation of FDHMP-3C to yield MFDHMP-3C. After the cytosolic methylation of FDHMP-3C, MFDHMP-3C enters into peroxisomes probably via free diffusion due to its low molecular weight. Upon a peroxisomal CoA ligation reaction, catalyzed by a beta-oxidation component enzyme acyl-CoA ligase ACL891, MFDHMP-3C-CoA would then be restricted to peroxisomes for the following beta-oxidation pathway steps. The peroxisomal beta-oxidation machinery than converts MFDHMP-3C-CoA into MPA_CoA, via a beta-oxidation chain-shortening process. Finally mpaH acts as a peroxisomal acyl-CoA hydrolase with high substrate specificity toward MPA-CoA to release the final product MPA. The chain is Type I acyl-CoA thioesterase mpaH' from Penicillium brevicompactum.